A 130-amino-acid polypeptide reads, in one-letter code: WAP four-disulfide core domain protein 3 (130 aa).

Positions 1–16 (MKALLALGFLASWVAA) are cleaved as a signal peptide. WAP domains lie at 17–61 (GEHA…RGDI) and 62–106 (EGGR…IPGL). Cystine bridges form between C25/C49, C32/C53, C36/C48, C42/C57, C69/C94, C77/C98, C81/C93, and C87/C102. N-linked (GlcNAc...) asparagine glycosylation is present at N116.

The protein localises to the secreted. In Mus musculus (Mouse), this protein is WAP four-disulfide core domain protein 3 (Wfdc3).